The sequence spans 278 residues: Inosose isomerase (278 aa).

4 residues coordinate a divalent metal cation: E142, D174, H200, and E246.

It belongs to the IolI family. A divalent metal cation serves as cofactor.

It catalyses the reaction scyllo-inosose = scyllo-inosine. It participates in polyol metabolism; myo-inositol degradation into acetyl-CoA. Functionally, involved in the reversible interconverion of 2-keto-myo-inositol (2KMI, inosose or 2,4,6/3,5-pentahydroxycyclohexanone) to 1-keto-D-chiro-inositol (1KDCI or 2,3,5/4,6-pentahydroxycyclohexanone). This chain is Inosose isomerase (iolI), found in Bacillus licheniformis (strain ATCC 14580 / DSM 13 / JCM 2505 / CCUG 7422 / NBRC 12200 / NCIMB 9375 / NCTC 10341 / NRRL NRS-1264 / Gibson 46).